The following is a 145-amino-acid chain: 3-hydroxyacyl-[acyl-carrier-protein] dehydratase FabZ (145 aa).

Residue histidine 49 is part of the active site.

This sequence belongs to the thioester dehydratase family. FabZ subfamily.

It localises to the cytoplasm. It carries out the reaction a (3R)-hydroxyacyl-[ACP] = a (2E)-enoyl-[ACP] + H2O. Involved in unsaturated fatty acids biosynthesis. Catalyzes the dehydration of short chain beta-hydroxyacyl-ACPs and long chain saturated and unsaturated beta-hydroxyacyl-ACPs. This Rickettsia typhi (strain ATCC VR-144 / Wilmington) protein is 3-hydroxyacyl-[acyl-carrier-protein] dehydratase FabZ.